The sequence spans 338 residues: Probable dual-specificity RNA methyltransferase RlmN (338 aa).

Catalysis depends on glutamate 89, which acts as the Proton acceptor. A Radical SAM core domain is found at 95–325 (HNYGMSACVT…AILRKEQGHD (231 aa)). A disulfide bond links cysteine 102 and cysteine 330. Positions 109, 113, and 116 each coordinate [4Fe-4S] cluster. Residues 156 to 157 (GE), serine 188, 211 to 213 (SLH), and asparagine 287 each bind S-adenosyl-L-methionine. Cysteine 330 functions as the S-methylcysteine intermediate in the catalytic mechanism.

Belongs to the radical SAM superfamily. RlmN family. Requires [4Fe-4S] cluster as cofactor.

Its subcellular location is the cytoplasm. The enzyme catalyses adenosine(2503) in 23S rRNA + 2 reduced [2Fe-2S]-[ferredoxin] + 2 S-adenosyl-L-methionine = 2-methyladenosine(2503) in 23S rRNA + 5'-deoxyadenosine + L-methionine + 2 oxidized [2Fe-2S]-[ferredoxin] + S-adenosyl-L-homocysteine. The catalysed reaction is adenosine(37) in tRNA + 2 reduced [2Fe-2S]-[ferredoxin] + 2 S-adenosyl-L-methionine = 2-methyladenosine(37) in tRNA + 5'-deoxyadenosine + L-methionine + 2 oxidized [2Fe-2S]-[ferredoxin] + S-adenosyl-L-homocysteine. Specifically methylates position 2 of adenine 2503 in 23S rRNA and position 2 of adenine 37 in tRNAs. The chain is Probable dual-specificity RNA methyltransferase RlmN from Acholeplasma laidlawii (strain PG-8A).